Reading from the N-terminus, the 104-residue chain is Integration host factor subunit alpha (104 aa).

This sequence belongs to the bacterial histone-like protein family. As to quaternary structure, heterodimer of an alpha and a beta chain.

Functionally, this protein is one of the two subunits of integration host factor, a specific DNA-binding protein that functions in genetic recombination as well as in transcriptional and translational control. In Bartonella quintana (strain Toulouse) (Rochalimaea quintana), this protein is Integration host factor subunit alpha.